A 323-amino-acid polypeptide reads, in one-letter code: tRNA U34 carboxymethyltransferase (323 aa).

Carboxy-S-adenosyl-L-methionine is bound by residues Lys91, Trp105, Lys110, Gly130, 152–154 (DPT), 181–182 (IE), Met196, Tyr200, and Arg315.

This sequence belongs to the class I-like SAM-binding methyltransferase superfamily. CmoB family. As to quaternary structure, homotetramer.

The catalysed reaction is carboxy-S-adenosyl-L-methionine + 5-hydroxyuridine(34) in tRNA = 5-carboxymethoxyuridine(34) in tRNA + S-adenosyl-L-homocysteine + H(+). Catalyzes carboxymethyl transfer from carboxy-S-adenosyl-L-methionine (Cx-SAM) to 5-hydroxyuridine (ho5U) to form 5-carboxymethoxyuridine (cmo5U) at position 34 in tRNAs. This chain is tRNA U34 carboxymethyltransferase, found in Escherichia coli O81 (strain ED1a).